The primary structure comprises 1193 residues: Nucleolar protein 6 (1193 aa).

Disordered regions lie at residues 1–69 (MRFV…TKNV) and 1137–1193 (KREQ…KVLK). 2 stretches are compositionally biased toward basic and acidic residues: residues 31–46 (AGDHSDLDEPKPKIAK) and 1151–1161 (DANKAEEESKP). Ser-35 is subject to Phosphoserine. Residues 1162 to 1184 (KPKKHRQRKGTGKKALPKRKRLI) show a composition bias toward basic residues.

This sequence belongs to the NRAP family. In terms of assembly, part of the small subunit (SSU) processome, composed of more than 70 proteins and the RNA chaperone small nucleolar RNA (snoRNA) U3. Expressed in nurse cells at stages 9-10 of oogenesis and exported to the oocyte.

The protein localises to the nucleus. The protein resides in the nucleolus. It is found in the chromosome. Functionally, part of the small subunit (SSU) processome, first precursor of the small eukaryotic ribosomal subunit. During the assembly of the SSU processome in the nucleolus, many ribosome biogenesis factors, an RNA chaperone and ribosomal proteins associate with the nascent pre-rRNA and work in concert to generate RNA folding, modifications, rearrangements and cleavage as well as targeted degradation of pre-ribosomal RNA by the RNA exosome. This Drosophila melanogaster (Fruit fly) protein is Nucleolar protein 6.